Reading from the N-terminus, the 455-residue chain is NADH-quinone oxidoreductase subunit N (455 aa).

Transmembrane regions (helical) follow at residues 25-45 (AIVPITIIGLLAIFGFNISEY), 61-81 (FSVAFSSLFIIITVFLVALSH), 99-119 (VFLLSGAVAMVSFGNLSMFFL), 149-169 (FLMGSFASGIILFGICLIYGA), 193-213 (IGIVFLLIGMLFKIATVPFHF), 257-277 (IQIIIVCVAIASMLLGNIMAL), 285-305 (MFAFSGISHAGFMVSTLLLTS), 312-332 (LYYASAYAIAGIAFFAVVMYV), 355-375 (AGILTAALLSMAGIPVLSGFF), 391-411 (IVVFVAIISSIISVGYYFKII), and 432-452 (IVAVVALILNIALGLFPNVVL).

The protein belongs to the complex I subunit 2 family. NDH-1 is composed of 14 different subunits. Subunits NuoA, H, J, K, L, M, N constitute the membrane sector of the complex.

It is found in the cell inner membrane. It catalyses the reaction a quinone + NADH + 5 H(+)(in) = a quinol + NAD(+) + 4 H(+)(out). In terms of biological role, NDH-1 shuttles electrons from NADH, via FMN and iron-sulfur (Fe-S) centers, to quinones in the respiratory chain. The immediate electron acceptor for the enzyme in this species is believed to be a menaquinone. Couples the redox reaction to proton translocation (for every two electrons transferred, four hydrogen ions are translocated across the cytoplasmic membrane), and thus conserves the redox energy in a proton gradient. The sequence is that of NADH-quinone oxidoreductase subunit N from Flavobacterium psychrophilum (strain ATCC 49511 / DSM 21280 / CIP 103535 / JIP02/86).